Here is a 419-residue protein sequence, read N- to C-terminus: MNIFDELKARGLVFQTTDEAALSKALTEDMVSYYVGYDPTADSLHLGNLVLILTMKRLQMAGHKPYALVGGATGLIGDPSFKDSERSLQTKDTVTKWSGKIRSQLERFLDFENGENKAEMTNNYNWFENLTFIDFLRDVGKHFTVNYMISKDSVKSRMESGISYTEFAYQIMQGYDFYELNQLHNVTLQLGGSDQWGNMTAGTELLRRKANKQGHVITIPLITDSTGKKFGKSEGNAIWLDADKTSPYEMYQFWLNVDDADAVKMLKIFTFLSLEEIAEIEEQFEAARHERLAQKVLAREVVSLVHGKAAYEQAVKTSEILFGGGDLRQLDAKSILTGLKAAPQHQVTDDEDLTLVELLISAGIAPSKRQAREDITNGAIYINGERVQALDYVITDSDKIENRLTVIRRGKKKNFVLTY.

Tyrosine 34 contacts L-tyrosine. Positions 39-48 match the 'HIGH' region motif; sequence PTADSLHLGN. 2 residues coordinate L-tyrosine: tyrosine 169 and glutamine 173. The short motif at 229 to 233 is the 'KMSKS' region element; the sequence is KFGKS. Lysine 232 lines the ATP pocket. Positions 353–419 constitute an S4 RNA-binding domain; the sequence is LTLVELLISA…GKKKNFVLTY (67 aa).

Belongs to the class-I aminoacyl-tRNA synthetase family. TyrS type 1 subfamily. As to quaternary structure, homodimer.

Its subcellular location is the cytoplasm. The enzyme catalyses tRNA(Tyr) + L-tyrosine + ATP = L-tyrosyl-tRNA(Tyr) + AMP + diphosphate + H(+). In terms of biological role, catalyzes the attachment of tyrosine to tRNA(Tyr) in a two-step reaction: tyrosine is first activated by ATP to form Tyr-AMP and then transferred to the acceptor end of tRNA(Tyr). This is Tyrosine--tRNA ligase from Lactococcus lactis subsp. lactis (strain IL1403) (Streptococcus lactis).